Reading from the N-terminus, the 157-residue chain is Transmembrane protein 42 (157 aa).

Transmembrane regions (helical) follow at residues 37 to 57 (FWGVFNCLCAGAFGALAAAAA), 67 to 87 (IGLCVLGIVAMASANSLMWTF), 100 to 120 (IASVTVTFSNILCSAILGYLL), and 124 to 144 (CQEILWWGGVFLILCGLTLIH).

The protein resides in the membrane. The protein is Transmembrane protein 42 (Tmem42) of Mus musculus (Mouse).